A 364-amino-acid chain; its full sequence is Apelin receptor (364 aa).

At 1–39 (MATDEFSSSTTPSYDYYDYTNESGLPPCDETDWDLSYSL) the chain is on the extracellular side. Asn-21 carries an N-linked (GlcNAc...) asparagine glycan. Cystine bridges form between Cys-28–Cys-288 and Cys-110–Cys-187. Residues 40–60 (LPVFYMIVFVLGLSGNGVVIF) form a helical membrane-spanning segment. Residues 61 to 78 (TVWKAKPKRRSADTYIGN) lie on the Cytoplasmic side of the membrane. The chain crosses the membrane as a helical span at residues 79–99 (LALADLAFVVTLPLWATYTAL). Residues 100-112 (GFHWPFGSALCKL) are Extracellular-facing. Residues 113–133 (SSYLVLLNMFASVFCLTCLSF) traverse the membrane as a helical segment. Residues 134 to 153 (DRYLAIVHSLSSAKLRSRSS) lie on the Cytoplasmic side of the membrane. A helical transmembrane segment spans residues 154 to 174 (ILVSLAVIWLFSGLLALPSLI). At 175–201 (LRDTRVEGNNTICDLDFSGVSSKENEN) the chain is on the extracellular side. Asn-183 carries an N-linked (GlcNAc...) asparagine glycan. The chain crosses the membrane as a helical span at residues 202–222 (FWIGGLSILTTVPGFLLPLLL). The Cytoplasmic segment spans residues 223–250 (MTIFYCFIGGKVTMHFQNLKKEEQKKKR). The chain crosses the membrane as a helical span at residues 251–271 (LLKIIITLVVVFAICWLPFHI). Residues 272 to 298 (LKTIHFLDLMGFLELSCSTQNIIVSLH) are Extracellular-facing. The chain crosses the membrane as a helical span at residues 299–319 (PYATCLAYINSCLNPFLYAFF). Over 320 to 364 (DLRFRSQCFFFFGFKKALQGHLSNTSSSLSAQTQKSEIHSLATKV) the chain is Cytoplasmic.

It belongs to the G-protein coupled receptor 1 family.

It localises to the cell membrane. Functionally, g protein-coupled receptor for peptide hormones apelin (apln) and apelin receptor early endogenous ligand (apela), that plays a role in the regulation of normal cardiovascular function and fluid homeostasis. When acting as apelin receptor, activates both G(i) protein pathway that inhibits adenylate cyclase activity, and the beta-arrestin pathway that promotes internalization of the receptor. Also functions as mechanoreceptor that is activated by pathological stimuli in a G-protein-independent fashion to induce beta-arrestin signaling, hence eliciting cardiac hypertrophy. However, the presence of apelin ligand blunts cardiac hypertrophic induction from APLNR/APJ on response to pathological stimuli. Plays a key role in early development such as gastrulation, blood vessels formation and heart morphogenesis by acting as a receptor for apela hormone, promoting endoderm and mesendoderm cell migration and regulating the migration of cells fated to become myocardial progenitors, respectively. Promotes angioblast migration toward the embryonic midline, i.e. the position of the future vessel formation, during vasculogenesis. May promote sinus venosus (SV)-derived endothelial cells migration into the developing heart to promote coronary blood vessel development. Required for cardiovascular development, particularly for intersomitic vein angiogenesis. Plays also a role in various processes in adults such as regulation of blood vessel formation, blood pressure, heart contractility, and heart failure. Acts upstream of the i/o type of G-alpha proteins in the differentiation of endothelium, erythroid cells, myeloid cells and cardiomyocytes. The protein is Apelin receptor (aplnr) of Xenopus tropicalis (Western clawed frog).